The primary structure comprises 248 residues: Ethylene-responsive transcription factor ERF026 (248 aa).

Residues 89–145 constitute a DNA-binding region (AP2/ERF); it reads VYRGIRCRSGKWVSEIREPKKTTRVWLGTYPTPEMAAAAYDVAALALKGGDTLLNFP. The segment at 225–248 is disordered; that stretch reads PPWMGSPPSDDSPENSDGESLWSY.

It belongs to the AP2/ERF transcription factor family. ERF subfamily.

The protein resides in the nucleus. Functionally, probably acts as a transcriptional activator. Binds to the GCC-box pathogenesis-related promoter element. May be involved in the regulation of gene expression by stress factors and by components of stress signal transduction pathways. This chain is Ethylene-responsive transcription factor ERF026 (ERF026), found in Arabidopsis thaliana (Mouse-ear cress).